We begin with the raw amino-acid sequence, 128 residues long: Flagellar assembly factor FliW 1 (128 aa).

The protein belongs to the FliW family. Interacts with translational regulator CsrA and flagellin(s).

It localises to the cytoplasm. Its function is as follows. Acts as an anti-CsrA protein, binds CsrA and prevents it from repressing translation of its target genes, one of which is flagellin. Binds to flagellin and participates in the assembly of the flagellum. The protein is Flagellar assembly factor FliW 1 of Wolinella succinogenes (strain ATCC 29543 / DSM 1740 / CCUG 13145 / JCM 31913 / LMG 7466 / NCTC 11488 / FDC 602W) (Vibrio succinogenes).